The chain runs to 64 residues: Large ribosomal subunit protein eL37 (64 aa).

The segment at 1–6 adopts a C4-type zinc-finger fold; that stretch reads GRCSAC. Positions 3 and 6 each coordinate Zn(2+).

This sequence belongs to the eukaryotic ribosomal protein eL37 family. Zn(2+) is required as a cofactor.

Functionally, binds to the 23S rRNA. This chain is Large ribosomal subunit protein eL37 (RPL37), found in Solanum lycopersicum (Tomato).